We begin with the raw amino-acid sequence, 220 residues long: Casparian strip membrane protein 4 (220 aa).

Residues 1–39 (MDSRREVEESSTAPILESKRTRSNGKGKSIDGDHSPPHA) are disordered. The Cytoplasmic segment spans residues 1–60 (MDSRREVEESSTAPILESKRTRSNGKGKSIDGDHSPPHAATVVTTKATPLQKGGMKKGIA). The helical transmembrane segment at 61-81 (ILDFILRLGAIGAALGAAVIM) threads the bilayer. Topologically, residues 82–108 (GTNEQILPFFTQFLQFHAQWDDFPMFK) are extracellular. Residues 109-129 (FFVVANGAAAGFLILSLPFSI) form a helical membrane-spanning segment. The Cytoplasmic segment spans residues 130 to 141 (VCIVRPLAAGPR). Residues 142–162 (FLLVIVDLVLMALVVAAASSA) form a helical membrane-spanning segment. The Extracellular segment spans residues 163–194 (AAVVYLAHNGSQDANWNAICQQFTDFCQGSSL). Residue N171 is glycosylated (N-linked (GlcNAc...) asparagine). A helical transmembrane segment spans residues 195 to 215 (AVVASFVASVFLACLVVVSSV). Residues 216–220 (ALKRT) are Cytoplasmic-facing.

This sequence belongs to the Casparian strip membrane proteins (CASP) family. In terms of assembly, homodimer and heterodimers.

Its subcellular location is the cell membrane. Functionally, regulates membrane-cell wall junctions and localized cell wall deposition. Required for establishment of the Casparian strip membrane domain (CSD) and the subsequent formation of Casparian strips, a cell wall modification of the root endodermis that determines an apoplastic barrier between the intraorganismal apoplasm and the extraorganismal apoplasm and prevents lateral diffusion. This Medicago truncatula (Barrel medic) protein is Casparian strip membrane protein 4.